Here is a 279-residue protein sequence, read N- to C-terminus: Dehydrogenase/reductase SDR family member 4 (279 aa).

37–61 (LVTASTDGIGLAIARRLAEDGAHVV) contacts NADP(+). N6-acetyllysine; alternate is present on Lys-93. Lys-93 is subject to N6-succinyllysine; alternate. Lys-106 carries the N6-acetyllysine modification. Ser-170 lines the substrate pocket. The active-site Proton acceptor is the Tyr-183. NADP(+) is bound at residue Lys-187. N6-acetyllysine; alternate is present on Lys-217. Lys-217 is subject to N6-succinyllysine; alternate. Phosphoserine is present on Ser-221. 2 positions are modified to N6-succinyllysine: Lys-228 and Lys-235. The Peroxisomal targeting signal signature appears at 277–279 (SRL).

The protein belongs to the short-chain dehydrogenases/reductases (SDR) family. Homotetramer.

It localises to the peroxisome. It carries out the reaction a secondary alcohol + NADP(+) = a ketone + NADPH + H(+). The catalysed reaction is 3alpha-hydroxy-5beta-pregnan-20-one + NADP(+) = 5beta-pregnan-3,20-dione + NADPH + H(+). It catalyses the reaction 5beta-dihydrotestosterone + NADPH + H(+) = 5beta-androstane-3alpha,17beta-diol + NADP(+). The enzyme catalyses all-trans-retinol + NADP(+) = all-trans-retinal + NADPH + H(+). It carries out the reaction isatin + NADPH + H(+) = 3-hydroxyindolin-2-one + NADP(+). Its function is as follows. NADPH-dependent oxidoreductase which catalyzes the reduction of a variety of compounds bearing carbonyl groups including ketosteroids, alpha-dicarbonyl compounds, aldehydes, aromatic ketones and quinones. Reduces all-trans-retinal and 9-cis retinal. Reduces 3-ketosteroids and benzil into 3alpha-hydroxysteroids and S-benzoin, respectively, in contrast to the stereoselectivity of primates DHRS4s which produce 3beta-hydroxysteroids and R-benzoin. In the reverse reaction, catalyzes the NADP-dependent oxidation of 3alpha-hydroxysteroids and alcohol, but with much lower efficiency. Involved in the metabolism of 3alpha-hydroxysteroids, retinoid, isatin and xenobiotic carbonyl compounds. The sequence is that of Dehydrogenase/reductase SDR family member 4 (Dhrs4) from Rattus norvegicus (Rat).